A 73-amino-acid chain; its full sequence is Protein SlyX homolog (73 aa).

The protein belongs to the SlyX family.

In Actinobacillus pleuropneumoniae serotype 5b (strain L20), this protein is Protein SlyX homolog.